Consider the following 357-residue polypeptide: CRISPR system Cms protein Csm5 (357 aa).

Belongs to the CRISPR-associated Csm5 family. As to quaternary structure, part of the Csm effector complex that includes at least Cas10(1), Csm2(3), Csm3(5), Csm4(1), Csm5(1) and mature crRNA. The Csm complex is elongated and slightly twisted with a maximal length of 215 Angstroms and a diameter of 75-80 Angstroms. It has been modeled to have a central protein filamant of Csm3 subunits along which the dsRNA helix of paired crRNA and target RNA binds. The filament is capped at one end by Cas10 and Csm4 and at the other end by Csm5; ssDNA is thought to bind to the N-terminal HD domain of Cas10. Csm with a precursor crRNA does not include Csm5, while Cas6, the enzyme probably involved in pre-crRNA processing, is found associated with a subset of the Csm complex.

Functionally, CRISPR (clustered regularly interspaced short palindromic repeat) is an adaptive immune system that provides protection against mobile genetic elements (viruses, transposable elements and conjugative plasmids). CRISPR clusters contain spacers, sequences complementary to antecedent mobile elements, and target invading nucleic acids. CRISPR clusters are transcribed and processed into CRISPR RNA (crRNA). The type III-A Csm effector complex binds crRNA and acts as a crRNA-guided RNase, DNase and cyclic oligoadenylate synthase; binding of target RNA cognate to the crRNA is required for all activities. In a heterologous host this Csm effector complex restricts ssRNA phage MS2, suggesting it may target RNA viruses in vivo. Csm functions as a non-specific ssDNase. Base-pairing between crRNA and target RNA to form a ternary Csm complex activates a ssDNase activity; target RNA cleavage suppresses the ssDNase, a temporal control that prevents uncontrolled DNA degradation. Viral RNA transcripts probably tether the Csm complex to the viral genome, recruiting Cas10 ssDNA activity which is able to degrade DNA in the transcription bubble, spatially controlling the DNase activity. In terms of biological role, this subunit might be involved in maturation of a crRNA intermediate to its mature form. The protein is CRISPR system Cms protein Csm5 of Streptococcus thermophilus.